Reading from the N-terminus, the 134-residue chain is Homeobox protein ceh-5 (134 aa).

A DNA-binding region (homeobox) is located at residues 35–94; it reads PKRPRTVFTDEQLEKLEESFNTSGYLSGSTRAKLAESLGLSDNQVKVWFQNRRTKQKKID.

The protein localises to the nucleus. The protein is Homeobox protein ceh-5 (ceh-5) of Caenorhabditis elegans.